Reading from the N-terminus, the 132-residue chain is UPF0299 membrane protein Ent638_2744 (132 aa).

4 helical membrane-spanning segments follow: residues 8 to 28 (VWQYLRAFILIYACLYAGIFI), 31 to 51 (LLPITIPGSIIGMLIMFLLLA), 63 to 83 (GCFVLIRYMALLFVPIGVGVM), and 93 to 113 (FGPIVVSCAISTLVVFLVVSW).

The protein belongs to the UPF0299 family.

It is found in the cell inner membrane. The protein is UPF0299 membrane protein Ent638_2744 of Enterobacter sp. (strain 638).